Here is a 467-residue protein sequence, read N- to C-terminus: Sialic acid-binding Ig-like lectin 12 (467 aa).

An N-terminal signal peptide occupies residues 1–18 (MLLLLLLLLLWGIKGVEG). Over 19–353 (QNPQEVFTLN…ATLSEMMMGT (335 aa)) the chain is Extracellular. Residues 21 to 141 (PQEVFTLNVE…TKYNYMWDKM (121 aa)) form the Ig-like V-type domain. Cystine bridges form between C40/C176, C45/C108, and C170/C219. N46 is a glycosylation site (N-linked (GlcNAc...) asparagine). R126 serves as a coordination point for N-acetylneuraminate. Ig-like C2-type domains lie at 152-239 (PQIL…LNVS) and 242-339 (PKNL…LSLS). Residues N167, N197, N216, N227, N237, N244, N262, N287, and N294 are each glycosylated (N-linked (GlcNAc...) asparagine). A disulfide bridge connects residues C278 and C323. The chain crosses the membrane as a helical span at residues 354–374 (FVGSGVTALLFLSVCILLLAV). Residues 375–467 (RSYRRKPARP…IKFPQRTAWP (93 aa)) lie on the Cytoplasmic side of the membrane. The ITIM motif motif lies at 430 to 435 (IHYATL). Y432 and Y455 each carry phosphotyrosine. An SLAM-like motif motif is present at residues 453-458 (TEYSEI).

Belongs to the immunoglobulin superfamily. SIGLEC (sialic acid binding Ig-like lectin) family. In terms of assembly, homodimer; disulfide-linked. Interacts with PTPN6/SHP-1 and PTPN11/SHP-2 upon phosphorylation. Phosphorylation of Tyr-432 is required for binding to PTPN6 and PTPN11. Phosphorylation of Tyr-455 is involved in binding to PTPN6. Tyr-432 needs to be phosphorylated prior to Tyr-455. Expressed by monocytic/myeloid lineage cells. Found at higher levels in spleen, liver and heart. Found at lower levels in kidney and lung.

It localises to the membrane. Putative adhesion molecule that mediates sialic-acid dependent binding to cells. The sialic acid recognition site may be masked by cis interactions with sialic acids on the same cell surface. In the immune response, may act as an inhibitory receptor upon ligand induced tyrosine phosphorylation by recruiting cytoplasmic phosphatase(s) via their SH2 domain(s) that block signal transduction through dephosphorylation of signaling molecules. The sequence is that of Sialic acid-binding Ig-like lectin 12 (Siglec12) from Mus musculus (Mouse).